We begin with the raw amino-acid sequence, 378 residues long: L-lactate dehydrogenase (378 aa).

The FMN hydroxy acid dehydrogenase domain maps to 1-378; the sequence is MIISASTDYR…ELSRDSLVKR (378 aa). Tyr-24 provides a ligand contact to substrate. Residues Ser-106 and Gln-127 each contribute to the FMN site. Tyr-129 serves as a coordination point for substrate. Thr-155 provides a ligand contact to FMN. Arg-164 contacts substrate. Residue Lys-251 participates in FMN binding. His-275 acts as the Proton acceptor in catalysis. A substrate-binding site is contributed by Arg-278. 306-330 lines the FMN pocket; the sequence is DSGIRTGLDVVRMLALGADCTMLGR.

Belongs to the FMN-dependent alpha-hydroxy acid dehydrogenase family. FMN is required as a cofactor.

It is found in the cell inner membrane. The enzyme catalyses (S)-lactate + A = pyruvate + AH2. Catalyzes the conversion of L-lactate to pyruvate. Is coupled to the respiratory chain. This is L-lactate dehydrogenase from Vibrio cholerae serotype O1 (strain ATCC 39315 / El Tor Inaba N16961).